Reading from the N-terminus, the 516-residue chain is MGLGGDQSFVPVMDSGQVRLKELGYKQELKRDLSVFSNFAISFSIISVLTGITTTYNTGLRFGGTVTLVYGWFLAGSFTMCVGLSMAEICSSYPTSGGLYYWSAMLAGPRWAPLASWMTGWFNIVGQWAVTASVDFSLAQLIQVIVLLSTGGRNGGGYKGSDFVVIGIHGGILFIHALLNSLPISVLSFIGQLAALWNLLGVLVLMILIPLVSTERATTKFVFTNFNTDNGLGITSYAYIFVLGLLMSQYTITGYDASAHMTEETVDADKNGPRGIISAIGISILFGWGYILGISYAVTDIPSLLSETNNSGGYAIAEIFYLAFKNRFGSGTGGIVCLGVVAVAVFFCGMSSVTSNSRMAYAFSRDGAMPMSPLWHKVNSREVPINAVWLSALISFCMALTSLGSIVAFQAMVSIATIGLYIAYAIPIILRVTLARNTFVPGPFSLGKYGMVVGWVAVLWVVTISVLFSLPVAYPITAETLNYTPVAVAGLVAITLSYWLFSARHWFTGPISNILS.

The next 12 membrane-spanning stretches (helical) occupy residues 33-53, 70-90, 113-133, 164-184, 189-209, 232-252, 275-295, 328-348, 383-403, 406-426, 452-472, and 483-503; these read LSVFSNFAISFSIISVLTGIT, YGWFLAGSFTMCVGLSMAEIC, PLASWMTGWFNIVGQWAVTAS, VVIGIHGGILFIHALLNSLPI, FIGQLAALWNLLGVLVLMILI, LGITSYAYIFVLGLLMSQYTI, GIISAIGISILFGWGYILGIS, FGSGTGGIVCLGVVAVAVFFC, VPINAVWLSALISFCMALTSL, IVAFQAMVSIATIGLYIAYAI, VVGWVAVLWVVTISVLFSLPV, and YTPVAVAGLVAITLSYWLFSA.

This sequence belongs to the amino acid-polyamine-organocation (APC) superfamily. Amino acid/choline transporter (ACT) (TC 2.A.3.4) family. In terms of tissue distribution, expressed in roots, rosette leaves, stems, cauline leaves, flowers and siliques.

The protein resides in the mitochondrion membrane. Functionally, may play a role in primary carbon metabolism and plant growth, by mediating the transport of GABA from the cytosol to mitochondria. When expressed in a heterologous system (yeast), imports Arg and Ala across the plasma membrane and exports Lys and Glu, but does not transport proline. In Arabidopsis thaliana (Mouse-ear cress), this protein is Amino-acid permease BAT1 (BAT1).